A 119-amino-acid chain; its full sequence is uncharacterized protein (119 aa).

The segment at 78 to 119 (SHRKSQQHQTQGNQVLRGTRKLESPTVGPRPGLRRQHTRNFL) is disordered. Residues 84-93 (QHQTQGNQVL) are compositionally biased toward polar residues. Positions 109–119 (GLRRQHTRNFL) are enriched in basic residues.

This is an uncharacterized protein from Saccharomyces cerevisiae (strain ATCC 204508 / S288c) (Baker's yeast).